The sequence spans 178 residues: Cytidylate kinase (178 aa).

7 to 15 (GLPGTGTTT) lines the ATP pocket.

Belongs to the cytidylate kinase family. Type 2 subfamily.

It localises to the cytoplasm. The catalysed reaction is CMP + ATP = CDP + ADP. The enzyme catalyses dCMP + ATP = dCDP + ADP. The chain is Cytidylate kinase from Methanococcus aeolicus (strain ATCC BAA-1280 / DSM 17508 / OCM 812 / Nankai-3).